The following is a 442-amino-acid chain: Decapping and exoribonuclease protein 1 (442 aa).

Over residues 31-40 (QSKLCKEKTT) the composition is skewed to basic and acidic residues. Positions 31–56 (QSKLCKEKTTSDSSSSRKPSQQRDNY) are disordered. A compositionally biased stretch (low complexity) spans 41 to 53 (SDSSSSRKPSQQR). Residue Arg-101 participates in substrate binding. Glu-255 is an a divalent metal cation binding site. A substrate-binding site is contributed by Glu-293. Residues Asp-295, Glu-306, and Leu-307 each contribute to the a divalent metal cation site. 2 residues coordinate substrate: Lys-308 and Gln-330.

This sequence belongs to the DXO/Dom3Z family. A divalent metal cation is required as a cofactor.

It localises to the cytoplasm. The catalysed reaction is a 5'-end NAD(+)-phospho-ribonucleoside in mRNA + H2O = a 5'-end phospho-ribonucleoside in mRNA + NAD(+) + H(+). It catalyses the reaction a 5'-end (N(7)-methyl 5'-triphosphoguanosine)-ribonucleoside-ribonucleotide in mRNA + H2O = a (N(7)-methyl 5'-triphosphoguanosine)-nucleoside + a 5'-end phospho-ribonucleoside in mRNA + H(+). Functionally, decapping enzyme for NAD-capped RNAs: specifically hydrolyzes the nicotinamide adenine dinucleotide (NAD) cap from a subset of RNAs by removing the entire NAD moiety from the 5'-end of an NAD-capped RNA. The NAD-cap is present at the 5'-end of some RNAs and snoRNAs. In contrast to the canonical 5'-end N7 methylguanosine (m7G) cap, the NAD cap promotes mRNA decay. Also acts as a non-canonical decapping enzyme that removes the entire cap structure of m7G capped or incompletely capped RNAs. Has decapping activity toward incomplete 5'-end m7G cap mRNAs such as unmethylated 5'-end-capped RNA (cap0), while it has no activity toward 2'-O-ribose methylated m7G cap (cap1). Also has 5'-3' exonuclease activity. In Saccharomyces cerevisiae (strain ATCC 204508 / S288c) (Baker's yeast), this protein is Decapping and exoribonuclease protein 1 (DXO1).